The chain runs to 251 residues: Pyridoxine 5'-phosphate synthase (251 aa).

Residue N7 coordinates 3-amino-2-oxopropyl phosphate. 9-10 (DH) serves as a coordination point for 1-deoxy-D-xylulose 5-phosphate. R18 contributes to the 3-amino-2-oxopropyl phosphate binding site. The Proton acceptor role is filled by H43. Residues R45 and H50 each contribute to the 1-deoxy-D-xylulose 5-phosphate site. E73 acts as the Proton acceptor in catalysis. Position 103 (T103) interacts with 1-deoxy-D-xylulose 5-phosphate. The active-site Proton donor is the H197. Residues G198 and 219–220 (GH) contribute to the 3-amino-2-oxopropyl phosphate site.

The protein belongs to the PNP synthase family. Homooctamer; tetramer of dimers.

The protein resides in the cytoplasm. The enzyme catalyses 3-amino-2-oxopropyl phosphate + 1-deoxy-D-xylulose 5-phosphate = pyridoxine 5'-phosphate + phosphate + 2 H2O + H(+). It functions in the pathway cofactor biosynthesis; pyridoxine 5'-phosphate biosynthesis; pyridoxine 5'-phosphate from D-erythrose 4-phosphate: step 5/5. In terms of biological role, catalyzes the complicated ring closure reaction between the two acyclic compounds 1-deoxy-D-xylulose-5-phosphate (DXP) and 3-amino-2-oxopropyl phosphate (1-amino-acetone-3-phosphate or AAP) to form pyridoxine 5'-phosphate (PNP) and inorganic phosphate. The protein is Pyridoxine 5'-phosphate synthase of Caulobacter sp. (strain K31).